The following is a 1124-amino-acid chain: Tyrosine-protein kinase JAK3 (1124 aa).

The segment at 1-223 (MAPPSEETPL…RRTVRRALRR (223 aa)) is interaction with cytokine/interferon/growth hormone receptors. Serine 17 is modified (phosphoserine). The FERM domain maps to 24 to 356 (GALHVLLPAR…GYFRLTTDSQ (333 aa)). Residues 375–475 (QCHGPITLDF…GVAVTLTSCC (101 aa)) enclose the SH2; atypical domain. One can recognise a Protein kinase 1 domain in the interval 521–781 (LEWHENLGHG…AVIRDLNSLI (261 aa)). Tyrosine 785 is subject to Phosphotyrosine; by autocatalysis. One can recognise a Protein kinase 2 domain in the interval 822 to 1111 (LKYISQLGKG…SRGCETHAFT (290 aa)). ATP contacts are provided by residues 828 to 836 (LGKGNFGSV) and lysine 855. A phosphotyrosine mark is found at tyrosine 904 and tyrosine 939. The Proton acceptor role is filled by aspartate 949. Phosphotyrosine; by autocatalysis occurs at positions 980 and 981.

This sequence belongs to the protein kinase superfamily. Tyr protein kinase family. JAK subfamily. In terms of assembly, interacts with STAM2 and MYO18A. Interacts with SHB. Interacts with CD69. In terms of processing, tyrosine phosphorylated in response to IL-2 and IL-4. Dephosphorylation of Tyr-980 and Tyr-981 by PTPN2 negatively regulates cytokine-mediated signaling. In NK cells and an NK-like cell line but not in resting T-cells or in other tissues. The S-form is more commonly seen in hematopoietic lines, whereas the B-form is detected in cells both of hematopoietic and epithelial origins.

It localises to the endomembrane system. The protein localises to the cytoplasm. It carries out the reaction L-tyrosyl-[protein] + ATP = O-phospho-L-tyrosyl-[protein] + ADP + H(+). Non-receptor tyrosine kinase involved in various processes such as cell growth, development, or differentiation. Mediates essential signaling events in both innate and adaptive immunity and plays a crucial role in hematopoiesis during T-cells development. In the cytoplasm, plays a pivotal role in signal transduction via its association with type I receptors sharing the common subunit gamma such as IL2R, IL4R, IL7R, IL9R, IL15R and IL21R. Following ligand binding to cell surface receptors, phosphorylates specific tyrosine residues on the cytoplasmic tails of the receptor, creating docking sites for STATs proteins. Subsequently, phosphorylates the STATs proteins once they are recruited to the receptor. Phosphorylated STATs then form homodimer or heterodimers and translocate to the nucleus to activate gene transcription. For example, upon IL2R activation by IL2, JAK1 and JAK3 molecules bind to IL2R beta (IL2RB) and gamma chain (IL2RG) subunits inducing the tyrosine phosphorylation of both receptor subunits on their cytoplasmic domain. Then, STAT5A and STAT5B are recruited, phosphorylated and activated by JAK1 and JAK3. Once activated, dimerized STAT5 translocates to the nucleus and promotes the transcription of specific target genes in a cytokine-specific fashion. The protein is Tyrosine-protein kinase JAK3 of Homo sapiens (Human).